Here is a 467-residue protein sequence, read N- to C-terminus: Argininosuccinate lyase (467 aa).

The protein belongs to the lyase 1 family. Argininosuccinate lyase subfamily.

It is found in the cytoplasm. It catalyses the reaction 2-(N(omega)-L-arginino)succinate = fumarate + L-arginine. The protein operates within amino-acid biosynthesis; L-arginine biosynthesis; L-arginine from L-ornithine and carbamoyl phosphate: step 3/3. This is Argininosuccinate lyase from Campylobacter curvus (strain 525.92).